The primary structure comprises 230 residues: V-type proton ATPase subunit E1 (230 aa).

Met1 is subject to N-acetylmethionine. Residues 8–67 are a coiled coil; it reads RQIQQMVRFIRQEAEEKANEISVSAEEEFNIEKLQLVEAEKKKIRQDYEKKEKQADVRKK. A Phosphoserine modification is found at Ser178.

The protein belongs to the V-ATPase E subunit family. V-ATPase is a heteromultimeric enzyme composed of a peripheral catalytic V1 complex (components A to H) attached to an integral membrane V0 proton pore complex (components: a, c, c'', d and e).

It is found in the vacuole membrane. In terms of biological role, subunit of the peripheral V1 complex of vacuolar ATPase essential for assembly or catalytic function. V-ATPase is responsible for acidifying a variety of intracellular compartments in eukaryotic cells. Required for Golgi organization and vacuole function in embryogenesis. This is V-type proton ATPase subunit E1 (VHA-E1) from Arabidopsis thaliana (Mouse-ear cress).